The following is a 228-amino-acid chain: Ribose-5-phosphate isomerase A (228 aa).

Substrate contacts are provided by residues Thr-28 to Thr-31, Asp-84 to Asp-87, and Lys-97 to Gly-100. Glu-106 (proton acceptor) is an active-site residue. Lys-124 contacts substrate.

It belongs to the ribose 5-phosphate isomerase family. Homodimer.

It catalyses the reaction aldehydo-D-ribose 5-phosphate = D-ribulose 5-phosphate. It functions in the pathway carbohydrate degradation; pentose phosphate pathway; D-ribose 5-phosphate from D-ribulose 5-phosphate (non-oxidative stage): step 1/1. Its function is as follows. Catalyzes the reversible conversion of ribose-5-phosphate to ribulose 5-phosphate. The sequence is that of Ribose-5-phosphate isomerase A from Levilactobacillus brevis (strain ATCC 367 / BCRC 12310 / CIP 105137 / JCM 1170 / LMG 11437 / NCIMB 947 / NCTC 947) (Lactobacillus brevis).